A 115-amino-acid polypeptide reads, in one-letter code: Phosphoribosyl-AMP cyclohydrolase (115 aa).

Asp80 contributes to the Mg(2+) binding site. Residue Cys81 participates in Zn(2+) binding. Mg(2+) contacts are provided by Asp82 and Asp84. Cys97 and Cys104 together coordinate Zn(2+).

This sequence belongs to the PRA-CH family. In terms of assembly, homodimer. The cofactor is Mg(2+). It depends on Zn(2+) as a cofactor.

It localises to the cytoplasm. The enzyme catalyses 1-(5-phospho-beta-D-ribosyl)-5'-AMP + H2O = 1-(5-phospho-beta-D-ribosyl)-5-[(5-phospho-beta-D-ribosylamino)methylideneamino]imidazole-4-carboxamide. Its pathway is amino-acid biosynthesis; L-histidine biosynthesis; L-histidine from 5-phospho-alpha-D-ribose 1-diphosphate: step 3/9. Its function is as follows. Catalyzes the hydrolysis of the adenine ring of phosphoribosyl-AMP. This is Phosphoribosyl-AMP cyclohydrolase from Rhodococcus erythropolis (strain PR4 / NBRC 100887).